The following is a 67-amino-acid chain: uncharacterized protein (67 aa).

This sequence belongs to the baculoviridae 8 kDa protein family.

This is an uncharacterized protein from Autographa californica nuclear polyhedrosis virus (AcMNPV).